Consider the following 338-residue polypeptide: Anthranilate phosphoribosyltransferase (338 aa).

5-phospho-alpha-D-ribose 1-diphosphate contacts are provided by residues G81, 84–85 (GD), T89, 91–94 (NIST), 109–117 (KHGNRALSS), and A121. G81 serves as a coordination point for anthranilate. A Mg(2+)-binding site is contributed by S93. Residue N112 participates in anthranilate binding. Position 167 (R167) interacts with anthranilate. The Mg(2+) site is built by D225 and E226.

It belongs to the anthranilate phosphoribosyltransferase family. Homodimer. Mg(2+) is required as a cofactor.

The enzyme catalyses N-(5-phospho-beta-D-ribosyl)anthranilate + diphosphate = 5-phospho-alpha-D-ribose 1-diphosphate + anthranilate. The protein operates within amino-acid biosynthesis; L-tryptophan biosynthesis; L-tryptophan from chorismate: step 2/5. Functionally, catalyzes the transfer of the phosphoribosyl group of 5-phosphorylribose-1-pyrophosphate (PRPP) to anthranilate to yield N-(5'-phosphoribosyl)-anthranilate (PRA). The protein is Anthranilate phosphoribosyltransferase of Rhizobium johnstonii (strain DSM 114642 / LMG 32736 / 3841) (Rhizobium leguminosarum bv. viciae).